Reading from the N-terminus, the 626-residue chain is Phosphomethylpyrimidine synthase (626 aa).

The disordered stretch occupies residues 1–22; it reads MTKQEKAINLSESAQVDQQSVQ. The span at 10–22 shows a compositional bias: polar residues; the sequence is LSESAQVDQQSVQ. Substrate is bound by residues Asn-232, Met-261, Tyr-290, His-326, 346 to 348, 387 to 390, and Glu-426; these read SRG and DGLR. A Zn(2+)-binding site is contributed by His-430. Tyr-453 is a substrate binding site. His-494 is a Zn(2+) binding site. [4Fe-4S] cluster-binding residues include Cys-574, Cys-577, and Cys-582.

It belongs to the ThiC family. In terms of assembly, homodimer. Requires [4Fe-4S] cluster as cofactor.

The enzyme catalyses 5-amino-1-(5-phospho-beta-D-ribosyl)imidazole + S-adenosyl-L-methionine = 4-amino-2-methyl-5-(phosphooxymethyl)pyrimidine + CO + 5'-deoxyadenosine + formate + L-methionine + 3 H(+). Its pathway is cofactor biosynthesis; thiamine diphosphate biosynthesis. Its function is as follows. Catalyzes the synthesis of the hydroxymethylpyrimidine phosphate (HMP-P) moiety of thiamine from aminoimidazole ribotide (AIR) in a radical S-adenosyl-L-methionine (SAM)-dependent reaction. In Pseudomonas putida (strain ATCC 700007 / DSM 6899 / JCM 31910 / BCRC 17059 / LMG 24140 / F1), this protein is Phosphomethylpyrimidine synthase.